We begin with the raw amino-acid sequence, 419 residues long: DNA primase DnaG (419 aa).

The Toprim domain occupies 168-244 (DTIIVVEGRS…KVDYVARAPE (77 aa)). Residues glutamate 174, aspartate 218, and aspartate 220 each contribute to the Mg(2+) site. 2 stretches are compositionally biased toward basic and acidic residues: residues 280 to 291 (KPAEEAVKREEE) and 306 to 316 (KAAKPPEEKPP). The disordered stretch occupies residues 280–317 (KPAEEAVKREEEAAAEAKPPAPAVQEKAAKPPEEKPPT).

Belongs to the archaeal DnaG primase family. Forms a ternary complex with MCM helicase and DNA. Component of the archaeal exosome complex. The cofactor is Mg(2+).

It catalyses the reaction ssDNA + n NTP = ssDNA/pppN(pN)n-1 hybrid + (n-1) diphosphate.. Functionally, RNA polymerase that catalyzes the synthesis of short RNA molecules used as primers for DNA polymerase during DNA replication. Also part of the exosome, which is a complex involved in RNA degradation. Acts as a poly(A)-binding protein that enhances the interaction between heteromeric, adenine-rich transcripts and the exosome. The sequence is that of DNA primase DnaG from Aeropyrum pernix (strain ATCC 700893 / DSM 11879 / JCM 9820 / NBRC 100138 / K1).